The following is a 95-amino-acid chain: Co-chaperonin GroES (95 aa).

The protein belongs to the GroES chaperonin family. In terms of assembly, heptamer of 7 subunits arranged in a ring. Interacts with the chaperonin GroEL.

The protein localises to the cytoplasm. Together with the chaperonin GroEL, plays an essential role in assisting protein folding. The GroEL-GroES system forms a nano-cage that allows encapsulation of the non-native substrate proteins and provides a physical environment optimized to promote and accelerate protein folding. GroES binds to the apical surface of the GroEL ring, thereby capping the opening of the GroEL channel. This Alkalilimnicola ehrlichii (strain ATCC BAA-1101 / DSM 17681 / MLHE-1) protein is Co-chaperonin GroES.